A 318-amino-acid polypeptide reads, in one-letter code: HTH-type transcriptional regulatory protein TyrR (318 aa).

Residues 15-239 (FIVQSEAMKS…LYNTLYRACS (225 aa)) form the Sigma-54 factor interaction; truncated domain. ATP-binding positions include 43-50 (GETGSGKD) and 101-110 (ANKGTVLLDG). Positions 292 to 312 (STRKLAQRLGVSHTAIANKLK) form a DNA-binding region, H-T-H motif.

Homodimer. In presence of tyrosine (or high concentrations of phenylalanine or tryptophan) and ATP, it self-associates to form a hexamer.

The protein resides in the cytoplasm. The DNA binding ability is drastically reduced in the presence of ATP. Tyrosine further reduces the binding affinity of TyrR in the presence of ATP. Its function is as follows. Transcriptional regulator of the TyrR regulon, which includes a number of genes coding for proteins involved in the biosynthesis or transport of the three aromatic amino acids, phenylalanine, tyrosine and tryptophan. These three aromatic amino acids act as effectors which bind to the TyrR protein to form an active regulatory protein. Acts by binding specifically to TyrR boxes in the promoter region of the target genes. Can efficiently repress the transcription of the aroF promoter, but lacks the ability to function as a transcriptional activator. This is HTH-type transcriptional regulatory protein TyrR from Haemophilus influenzae (strain ATCC 51907 / DSM 11121 / KW20 / Rd).